Consider the following 114-residue polypeptide: V-type proton ATPase subunit G (114 aa).

Residue S2 is modified to N-acetylserine.

It belongs to the V-ATPase G subunit family. V-ATPase is a heteromultimeric enzyme composed of a peripheral catalytic V1 complex (components A to H) attached to an integral membrane V0 proton pore complex (components: a, c, c', c'', d, e, f and VOA1).

The protein resides in the vacuole membrane. In terms of biological role, subunit of the V1 complex of vacuolar(H+)-ATPase (V-ATPase), a multisubunit enzyme composed of a peripheral complex (V1) that hydrolyzes ATP and a membrane integral complex (V0) that translocates protons. V-ATPase is responsible for acidifying and maintaining the pH of intracellular compartments. This is V-type proton ATPase subunit G from Saccharomyces cerevisiae (strain ATCC 204508 / S288c) (Baker's yeast).